We begin with the raw amino-acid sequence, 202 residues long: ER membrane protein complex subunit 7 homolog (202 aa).

Positions 1 to 23 (MAPIFRSTSLIAFSLFFFFFAST) are cleaved as a signal peptide. A helical membrane pass occupies residues 148 to 168 (IVKSPMGLMVGFMVVVVFLMP). The disordered stretch occupies residues 179 to 202 (MKSAQEQMRSQGVPSLTSLLPASR). Polar residues predominate over residues 182-202 (AQEQMRSQGVPSLTSLLPASR).

Belongs to the EMC7 family.

It localises to the membrane. The protein is ER membrane protein complex subunit 7 homolog of Arabidopsis thaliana (Mouse-ear cress).